The primary structure comprises 38 residues: Large ribosomal subunit protein bL36 (38 aa).

Belongs to the bacterial ribosomal protein bL36 family.

The polypeptide is Large ribosomal subunit protein bL36 (Methylacidiphilum infernorum (isolate V4) (Methylokorus infernorum (strain V4))).